Here is a 68-residue protein sequence, read N- to C-terminus: ATP synthase F(0) complex subunit 8 (68 aa).

A helical membrane pass occupies residues 8–24 (TWFTIIMAMLPTLYLIT). Lysine 54 is modified (N6-acetyllysine; alternate). N6-succinyllysine; alternate is present on lysine 54. N6-acetyllysine is present on lysine 57.

It belongs to the ATPase protein 8 family. In terms of assembly, component of the ATP synthase complex composed at least of ATP5F1A/subunit alpha, ATP5F1B/subunit beta, ATP5MC1/subunit c (homooctomer), MT-ATP6/subunit a, MT-ATP8/subunit 8, ATP5ME/subunit e, ATP5MF/subunit f, ATP5MG/subunit g, ATP5MK/subunit k, ATP5MJ/subunit j, ATP5F1C/subunit gamma, ATP5F1D/subunit delta, ATP5F1E/subunit epsilon, ATP5PF/subunit F6, ATP5PB/subunit b, ATP5PD/subunit d, ATP5PO/subunit OSCP. ATP synthase complex consists of a soluble F(1) head domain (subunits alpha(3) and beta(3)) - the catalytic core - and a membrane F(0) domain - the membrane proton channel (subunits c, a, 8, e, f, g, k and j). These two domains are linked by a central stalk (subunits gamma, delta, and epsilon) rotating inside the F1 region and a stationary peripheral stalk (subunits F6, b, d, and OSCP). Interacts with PRICKLE3.

The protein resides in the mitochondrion membrane. In terms of biological role, subunit 8, of the mitochondrial membrane ATP synthase complex (F(1)F(0) ATP synthase or Complex V) that produces ATP from ADP in the presence of a proton gradient across the membrane which is generated by electron transport complexes of the respiratory chain. ATP synthase complex consist of a soluble F(1) head domain - the catalytic core - and a membrane F(1) domain - the membrane proton channel. These two domains are linked by a central stalk rotating inside the F(1) region and a stationary peripheral stalk. During catalysis, ATP synthesis in the catalytic domain of F(1) is coupled via a rotary mechanism of the central stalk subunits to proton translocation. In vivo, can only synthesize ATP although its ATP hydrolase activity can be activated artificially in vitro. Part of the complex F(0) domain. The protein is ATP synthase F(0) complex subunit 8 of Papio hamadryas (Hamadryas baboon).